The sequence spans 648 residues: MDKIEEIHKYNADNIQILEGLEAVRKRPGMYIGSIGFKGLHHLLWEIVDNSVDEAMAGFATEIKIKLYPNNVIEVEDNGRGMPTGIHSGTKKSAVETILTVLHAGGKFDGSNYKVSGGLHGVGASVVNALSSEFEVWVKRDGKLHYQQFRNGGIPVKPLEVIGNVSEVETGTTIKFHPDYTIMEKENFDFDTIIDHSKQIAYLNKGLKITVENVEKNIIKVFCFEGGLIDYVKELNKGKKLIVPEVIYAEGVFNDKNFTNGQDVIVEVAMQYNEAYTNSIVSYANNIQTIDGGTHEQGFYDALVRIYNNYAETNKLFKTSSEKITREDVKEGLVAIISIKHTDPIFEGQTKGKLENKDARIATNKILSDSLERYLNENPEIARAIIEKCLLSQHTRLLEIKAREASRKGNGLDLGNLPGKLADCSSKNAEIRELFIVEGNSAGGSAKMGRDRSIQAILPLRGKVINAEKNSFASVLSNKEIATMIHALGTGINTEFDINKLKYHKIIIMTDADVDGAHITTLLLTFFYRYMKPLIEYGFVYLAQPPLYKITSGKNVEYAYNDLQKEQIMAKLEDKRNVAIQRYKGLGEMDPEQLWETTMDPETRKMLQVQIDDAAICDTVFATLMGEEIEPRHDFIQENAKYANNIDI.

One can recognise a Toprim domain in the interval 432-546 (RELFIVEGNS…YGFVYLAQPP (115 aa)). Positions 438, 511, and 513 each coordinate Mg(2+).

It belongs to the type II topoisomerase GyrB family. In terms of assembly, heterotetramer, composed of two GyrA and two GyrB chains. In the heterotetramer, GyrA contains the active site tyrosine that forms a transient covalent intermediate with DNA, while GyrB binds cofactors and catalyzes ATP hydrolysis. It depends on Mg(2+) as a cofactor. Mn(2+) serves as cofactor. Requires Ca(2+) as cofactor.

The protein localises to the cytoplasm. It catalyses the reaction ATP-dependent breakage, passage and rejoining of double-stranded DNA.. Its function is as follows. A type II topoisomerase that negatively supercoils closed circular double-stranded (ds) DNA in an ATP-dependent manner to modulate DNA topology and maintain chromosomes in an underwound state. Negative supercoiling favors strand separation, and DNA replication, transcription, recombination and repair, all of which involve strand separation. Also able to catalyze the interconversion of other topological isomers of dsDNA rings, including catenanes and knotted rings. Type II topoisomerases break and join 2 DNA strands simultaneously in an ATP-dependent manner. The protein is DNA gyrase subunit B of Metamycoplasma hominis (strain ATCC 23114 / DSM 25592 / NBRC 14850 / NCTC 10111 / PG21) (Mycoplasma hominis).